A 49-amino-acid chain; its full sequence is Large ribosomal subunit protein eL40 (49 aa).

The protein belongs to the eukaryotic ribosomal protein eL40 family.

In Natronomonas pharaonis (strain ATCC 35678 / DSM 2160 / CIP 103997 / JCM 8858 / NBRC 14720 / NCIMB 2260 / Gabara) (Halobacterium pharaonis), this protein is Large ribosomal subunit protein eL40.